Reading from the N-terminus, the 154-residue chain is Protein X (154 aa).

The mitochondrial targeting sequence stretch occupies residues 68–117; the sequence is PCALRFTSARRMETTVNAPWNLPTTLHKRTLGLSPRSTTWIEEYIKDCVF.

This sequence belongs to the orthohepadnavirus protein X family. As to quaternary structure, may form homodimer. May interact with host CEBPA, CFLAR, CREB1, DDB1, E4F1, HBXIP, HSPD1/HSP60, NFKBIA, POLR2E and SMAD4. Interacts with host SMC5-SMC6 complex and induces its degradation. Interacts with host TRPC4AP; leading to prevent ubiquitination of TRPC4AP. Interacts with host PLSCR1; this interaction promotes ubiquitination and degradation of HBx and impairs HBx-mediated cell proliferation. Post-translationally, a fraction may be phosphorylated in insect cells and HepG2 cells, a human hepatoblastoma cell line. Phosphorylated in vitro by host protein kinase C or mitogen-activated protein kinase. N-acetylated in insect cells.

Its subcellular location is the host cytoplasm. It localises to the host nucleus. The protein resides in the host mitochondrion. Its function is as follows. Multifunctional protein that plays a role in silencing host antiviral defenses and promoting viral transcription. Does not seem to be essential for HBV infection. May be directly involved in development of cirrhosis and liver cancer (hepatocellular carcinoma). Most of cytosolic activities involve modulation of cytosolic calcium. The effect on apoptosis is controversial depending on the cell types in which the studies have been conducted. May induce apoptosis by localizing in mitochondria and causing loss of mitochondrial membrane potential. May also modulate apoptosis by binding host CFLAR, a key regulator of the death-inducing signaling complex (DISC). Promotes viral transcription by using the host E3 ubiquitin ligase DDB1 to target the SMC5-SMC6 complex to proteasomal degradation. This host complex would otherwise bind to viral episomal DNA, and prevents its transcription. Moderately stimulates transcription of many different viral and cellular transcription elements. Promoters and enhancers stimulated by HBx contain DNA binding sites for NF-kappa-B, AP-1, AP-2, c-EBP, ATF/CREB, or the calcium-activated factor NF-AT. The chain is Protein X from Homo sapiens (Human).